A 442-amino-acid chain; its full sequence is MKAHLLLFMRIIYIHRCPLNEVAPPGQVVEVFGKAIQALSRVSDELWLDPSEKGLALRSVNSCRSAYGCVLFSPVFFQHYQWSASVKMNDTDIILNLNCRLGMKSILPIFRCLNSLEKNVEKCKIFTRSDKCKVVIQFFCRHGIKKIHNVCFQGSRPLQVIFQKNMCANTLVIQPRVLAEAIVLFTSSQEEVTLAVTPLKVCIKSSNEESMDLTDSVYSEMFVGPDEFDFFQIGIDTEITFCFKELKGVLTFSEAIHAPIAIHFDFPGKPMALSIDDMLLEANFILATLADEPSRASSLQTLYLSQKQRRSEPIHSNSKAGKNITSKVPEYISRKVEPKRLYSNETPTNISTLENCGSPLMKRANKDITEVPESDGNLSEVPESSVSDTEDVPGSPCLKKFSCMFFGAASSDQQEPFSLPFQSLATASGSEEDMNNGSFSTF.

Disordered regions lie at residues 370-392 and 422-442; these read EVPE…TEDV and QSLA…FSTF. Ser387 is subject to Phosphoserine.

It belongs to the rad9 family. In terms of assembly, interacts with HUS1, HUS1B, RAD1, RAD9A and RAD17.

In Bos taurus (Bovine), this protein is Cell cycle checkpoint control protein RAD9B (RAD9B).